Here is a 1191-residue protein sequence, read N- to C-terminus: MASRQGFSNVNEDEPELPPSVLSLKSKFESLSTGDLTNLDEKTAKRRTVKGCKNGTSEPNVFKARPIPPPRQVSSTIGSSTGRKVSGSIQRLASNFKNPSNPHADVSKIDRLPSDSSESHVATPSSPTISNSFVSVSPLLKRPQQKGPEISFQSSVQSTKGNDLMKHDDTNNHQIPPPKPNFSSKAGSSSPISVSPLKNVKAYISQSPTHSEASSVLSSEEEEENVINSSKSVPSFDLHDPFSQTFGKECPISTAPPVLNIGDRSLETPPPIPSPRPPQPVAVEAIQQSRAVISQQLPLHVSPRKPPKPPLRKVSTQRSSSPIENLATKSDASLVTGLQSSPYTHIAPASEMSLIPEKPRLPPRPSHTLSELSSPALTSENLSSKPSPLFPPPPPRVKSLATNKPVSMPVSTEQSDPSVAASSSSSSQLDVVLKGSIPDTSSVRRNPPCFVNGVESINVDFEARIFDVSGDRLVLAGNGGLRVYDTVTGLCHWHMPLGDTKVTSLSFKSSPENYSDDGRFVWFGTRDGMLWEVDVQNHHIVTKKSVSNCPITYVMVYKNEMWTLDDMGKLYVWQEDEIMGLSIQSTPHSIRTIPHATHAMVLDNRLLWVVVGKSIYVYDPSTSENESASVLAKPMTPPGLIGDISCGTTISNFTDLVFYGHVDGKISIFSKTQYRFLELITSSSFYRICSLVGVGNTLWAAYTTGMIYVFDVSESPWRLLKSWHGHKASHNGATTILGIDVNSVWKAKRLQVVSMASSVVKFWDGLMMGDWLATEMRSRFPEYSNFTDVSILICSWNAGASKPSDLDSDTIGASMIPMMIRDNGYPDIVVFGFQELVDLENKRLTARSILSKSSSKGGSSNSANISSQYRLWREKLESEMMRVSSNDDYQVLVCENLVGLFSCVFVKNKLQSKIRMLQSTTVKTGLGGLHGNKGAIVVRFLVDDTSYCIVNCHLAAGQSNKAARNNDLATILDNASLFPENDETDQLNTFVGGGDGSLIMDHEVCVLHGDLNYRINTLRPKALDLIKKNDIKTLLQSDQLLVERKRNAGFRLRTFTEPEITFAPTYKYDVHSEQYDSSEKKRVPAWCDRICYRGSPDYISAENYTRYELKASDHRPVSALIHSKAKMVNAQSQGSTWDVVKRKWIEYADEFKRKAKITYVMNYTSVSYQTAEQYLSGNNWNVQNALKQVSS.

Polar residues-rich tracts occupy residues 1–10, 72–101, 114–135, 151–161, and 181–193; these read MASRQGFSNV, QVSS…NPSN, SDSS…SFVS, SFQSSVQSTKG, and NFSS…SPIS. The interval 1–193 is disordered; the sequence is MASRQGFSNV…SKAGSSSPIS (193 aa). At S195 the chain carries Phosphoserine. Disordered stretches follow at residues 205 to 281, 294 to 334, and 355 to 425; these read SQSP…PQPV, SQQL…DASL, and IPEK…SSSS. Positions 268-280 are enriched in pro residues; it reads TPPPIPSPRPPQP. A compositionally biased stretch (basic residues) spans 302–311; it reads SPRKPPKPPL. Polar residues-rich tracts occupy residues 316–334, 367–382, and 400–413; these read TQRS…DASL, HTLS…SENL, and LATN…VSTE. The segment covering 414–425 has biased composition (low complexity); that stretch reads QSDPSVAASSSS.

It belongs to the inositol 1,4,5-trisphosphate 5-phosphatase family.

It localises to the cytoplasm. This is Probable inositol polyphosphate 5-phosphatase C9G1.10c from Schizosaccharomyces pombe (strain 972 / ATCC 24843) (Fission yeast).